A 473-amino-acid polypeptide reads, in one-letter code: Isocitrate dehydrogenase [NADP] (473 aa).

Thr104 contacts NADP(+). 5 residues coordinate D-threo-isocitrate: Ser113, Asn115, Arg119, Arg129, and Arg153. Asp362 is a Mg(2+) binding site. Residues 394-400, Asn407, Tyr446, and Arg450 contribute to the NADP(+) site; that span reads HGTAPKH.

The protein belongs to the isocitrate and isopropylmalate dehydrogenases family. As to quaternary structure, homodimer. Mg(2+) is required as a cofactor. It depends on Mn(2+) as a cofactor.

The enzyme catalyses D-threo-isocitrate + NADP(+) = 2-oxoglutarate + CO2 + NADPH. With respect to regulation, inhibited by either oxaloacetate or glyoxylate. Also inhibited by the adenine nucleotides AMP, ADP and ATP and by NADPH, which inhibits the activity by 28% when it is added to the assay mixture at 0.25 mM. In terms of biological role, catalyzes the oxidative decarboxylation of isocitrate to 2-oxoglutarate and carbon dioxide with the concomitant reduction of NADP(+). The sequence is that of Isocitrate dehydrogenase [NADP] from Nostoc sp. (strain PCC 7120 / SAG 25.82 / UTEX 2576).